Consider the following 335-residue polypeptide: MQTSHLFTALQQRQQQRDNRYLKGLVVILLLSLLISLCAGDIWLWPTQWFSETGRLFVWQLRLPRALAVLMVGASLAVSGAVMQALFENPLAEPGLLGVANGAGVALVMAVLLGHGLLPIWFLSACAIAGALLMTMLLLGFARRRLLTNARLLLVGVALGIVCSAIMTWAVYFSTSLDLRQLMYWMMGGFSGIDWRHQGLVLALLPIVLWLCCQGHVLNFMSLGEQQAQQLGVSLHLWRNLLVLAIGLLVGVSVALAGVISFIGLVIPHILRLTGLTDQRRLLAGCALAGGGILLLADIVARIALFSAELPIGVVTATLGAPLFIWLLTRVKSVK.

The next 9 helical transmembrane spans lie at 25 to 45 (LVVI…IWLW), 67 to 87 (LAVL…QALF), 95 to 114 (GLLG…VLLG), 118 to 140 (LPIW…LLLG), 153 to 173 (LLVG…AVYF), 200 to 220 (LVLA…VLNF), 243 to 263 (VLAI…ISFI), 286 to 306 (CALA…IALF), and 308 to 328 (AELP…IWLL).

It belongs to the binding-protein-dependent transport system permease family. FecCD subfamily. As to quaternary structure, the complex is composed of two ATP-binding proteins (BtuD), two transmembrane proteins (BtuC) and a solute-binding protein (BtuF).

The protein localises to the cell inner membrane. Functionally, part of the ABC transporter complex BtuCDF involved in vitamin B12 import. Involved in the translocation of the substrate across the membrane. In Yersinia enterocolitica serotype O:8 / biotype 1B (strain NCTC 13174 / 8081), this protein is Vitamin B12 import system permease protein BtuC.